The sequence spans 556 residues: Thermosome subunit beta (556 aa).

The segment at 530–556 (LSTDKGDDDGGAGGMGGGMGGGMGGMM) is disordered. Positions 540 to 556 (GAGGMGGGMGGGMGGMM) are enriched in gly residues.

The protein belongs to the TCP-1 chaperonin family. As to quaternary structure, forms an oligomeric complex of eight-membered rings.

In terms of biological role, molecular chaperone; binds unfolded polypeptides in vitro, and has a weak ATPase activity. This chain is Thermosome subunit beta (thsB), found in Halobacterium salinarum (strain ATCC 700922 / JCM 11081 / NRC-1) (Halobacterium halobium).